Reading from the N-terminus, the 433-residue chain is 3-phosphoshikimate 1-carboxyvinyltransferase (433 aa).

Lys-22, Ser-23, and Arg-27 together coordinate 3-phosphoshikimate. Residue Lys-22 participates in phosphoenolpyruvate binding. 2 residues coordinate phosphoenolpyruvate: Gly-96 and Arg-129. 3-phosphoshikimate-binding residues include Ser-175, Ser-176, Gln-177, Ser-203, Asp-318, Asn-341, and Lys-345. Gln-177 contributes to the phosphoenolpyruvate binding site. Asp-318 acts as the Proton acceptor in catalysis. Positions 349, 393, and 418 each coordinate phosphoenolpyruvate.

This sequence belongs to the EPSP synthase family. As to quaternary structure, monomer.

Its subcellular location is the cytoplasm. The catalysed reaction is 3-phosphoshikimate + phosphoenolpyruvate = 5-O-(1-carboxyvinyl)-3-phosphoshikimate + phosphate. It functions in the pathway metabolic intermediate biosynthesis; chorismate biosynthesis; chorismate from D-erythrose 4-phosphate and phosphoenolpyruvate: step 6/7. In terms of biological role, catalyzes the transfer of the enolpyruvyl moiety of phosphoenolpyruvate (PEP) to the 5-hydroxyl of shikimate-3-phosphate (S3P) to produce enolpyruvyl shikimate-3-phosphate and inorganic phosphate. The protein is 3-phosphoshikimate 1-carboxyvinyltransferase of Mannheimia succiniciproducens (strain KCTC 0769BP / MBEL55E).